The sequence spans 337 residues: Serpentine receptor class alpha-17 (337 aa).

Helical transmembrane passes span 28-48, 110-130, 155-175, 197-217, 247-267, and 282-302; these read LNFVFIATVIFLSFYFAGLAI, ELYFYYLTNYFSTYAVFSLTF, IIQLLLSLSTYYVGLYGVPLV, FRTATMVFCIIVTIFIYYLSV, CILIVLQFACIMLSSFGVNYI, and IAPFFPGVTYASLCLPLVIYF.

The protein belongs to the nematode receptor-like protein sra family.

Its subcellular location is the membrane. This Caenorhabditis elegans protein is Serpentine receptor class alpha-17 (sra-17).